The chain runs to 781 residues: MTEPLHTSSNGGAERGPNAAFESEKTLQTTTRLQRFDSLHMEAGKIPGGQSHTAKVGWATTLHLAFQSIGVVYGDMGTSPLYVFSSTFTNGIKDTNDILGVMSLIIYTVVLLPLIKYCFIVLRANDNGDGGTFALYSLISRYARISLIPNQQAEDAMVSHYKLESPSNRVKRAHWIKEKMENSPNFKIILFLVTILATSMVIGDGVLTPCISVLSAVGGIKESAKSLTQGQIAGIAIAILIVLFLVQRFGTDKVGYSFGPIILTWFIFIAGTGVYNLFKHDTGVLKAFNPKYIVDYFERNGKQGWISLGGVILCITGTEAMFADLGHFNVRAIQIGFSVVLLPSVLLAYIGQAAYLRIYPEHVADTFYKSIPDPLYWPTFVVAVAAAIIASQAMISGAFAIIAQSQILGCFPRVRVIHTSTKFHGQVYIPEINYVLMVLCVAVTAIFQTTDKIGNAYGIAVVFVMFITTLLVTLVMVMIWKTSLLWIALFPVIFGGAELIYLSSAFYKFTQGGYLPLVFSAILMFIMATWHYVHVHRYKYELRNKVSNNYVAELAVKQNLARLPGIGFLYSELVQGIPPILPHLVEKVPSIHSVLVIISIKYLPISKIETKERFLFRYVEPKEYRVFRCVVRYGYNDKVEDPAEFESLVIENLKQFIHEESLYSQSSHSLEGESIKEIGGVTDPTSEVQDAMSSRNNSDQHTTEPRNGCMDEIQSIHKEMGNGVVHLLGETNVVAEPNADFLKKIIVDYVYNFIRKNFRQPEKITCVPHNRLLRVGMTYEI.

The span at 1 to 11 (MTEPLHTSSNG) shows a compositional bias: polar residues. The disordered stretch occupies residues 1 to 24 (MTEPLHTSSNGGAERGPNAAFESE). Residues 1–63 (MTEPLHTSSN…AKVGWATTLH (63 aa)) are Cytoplasmic-facing. A helical transmembrane segment spans residues 64–84 (LAFQSIGVVYGDMGTSPLYVF). Residues 85 to 100 (SSTFTNGIKDTNDILG) are Extracellular-facing. A helical transmembrane segment spans residues 101–121 (VMSLIIYTVVLLPLIKYCFIV). Residues 122–187 (LRANDNGDGG…EKMENSPNFK (66 aa)) are Cytoplasmic-facing. The helical transmembrane segment at 188–208 (IILFLVTILATSMVIGDGVLT) threads the bilayer. At 209–225 (PCISVLSAVGGIKESAK) the chain is on the extracellular side. A helical transmembrane segment spans residues 226–246 (SLTQGQIAGIAIAILIVLFLV). The Cytoplasmic portion of the chain corresponds to 247-257 (QRFGTDKVGYS). Residues 258 to 278 (FGPIILTWFIFIAGTGVYNLF) traverse the membrane as a helical segment. Residues 279 to 304 (KHDTGVLKAFNPKYIVDYFERNGKQG) are Extracellular-facing. Residues 305-325 (WISLGGVILCITGTEAMFADL) traverse the membrane as a helical segment. The Cytoplasmic segment spans residues 326–334 (GHFNVRAIQ). Residues 335–355 (IGFSVVLLPSVLLAYIGQAAY) form a helical membrane-spanning segment. The Extracellular segment spans residues 356-381 (LRIYPEHVADTFYKSIPDPLYWPTFV). A helical transmembrane segment spans residues 382–402 (VAVAAAIIASQAMISGAFAII). Residues 403–426 (AQSQILGCFPRVRVIHTSTKFHGQ) lie on the Cytoplasmic side of the membrane. The helical transmembrane segment at 427 to 447 (VYIPEINYVLMVLCVAVTAIF) threads the bilayer. At 448–458 (QTTDKIGNAYG) the chain is on the extracellular side. A helical transmembrane segment spans residues 459 to 479 (IAVVFVMFITTLLVTLVMVMI). The Cytoplasmic portion of the chain corresponds to 480-481 (WK). A helical membrane pass occupies residues 482–502 (TSLLWIALFPVIFGGAELIYL). Topologically, residues 503-512 (SSAFYKFTQG) are extracellular. Residues 513–533 (GYLPLVFSAILMFIMATWHYV) form a helical membrane-spanning segment. Over 534–781 (HVHRYKYELR…LLRVGMTYEI (248 aa)) the chain is Cytoplasmic. The interval 681-707 (VTDPTSEVQDAMSSRNNSDQHTTEPRN) is disordered. A compositionally biased stretch (polar residues) spans 683-700 (DPTSEVQDAMSSRNNSDQ).

Belongs to the HAK/KUP transporter (TC 2.A.72.3) family. In terms of tissue distribution, expressed in root epidermis, parenchyma of stele tissue and primordial of the lateral root, root-shoot junctions and leaf sheaths. Expressed in germinated embryonic tissue, young tillers, flower organs and pedicels.

The protein localises to the cell membrane. The enzyme catalyses K(+)(in) = K(+)(out). High-affinity potassium transporter. Its potassium transporter activity does not seem to be affected by high sodium and low potassium concentrations in the extracellular environment. Invloved in salt stress tolerance by enhancing root potassium uptake and translocation to the shoot to prevent sodium influx during salt stress. Involved in the positive regulation of disease resistance against the rice grassy stunt virus by promoting potassium transport and increasing endogenous plant potassium. The chain is Potassium transporter 5 (HAK5) from Oryza sativa subsp. japonica (Rice).